The chain runs to 124 residues: Large ribosomal subunit protein bL12 (124 aa).

It belongs to the bacterial ribosomal protein bL12 family. Homodimer. Part of the ribosomal stalk of the 50S ribosomal subunit. Forms a multimeric L10(L12)X complex, where L10 forms an elongated spine to which 2 to 4 L12 dimers bind in a sequential fashion. Binds GTP-bound translation factors.

In terms of biological role, forms part of the ribosomal stalk which helps the ribosome interact with GTP-bound translation factors. Is thus essential for accurate translation. The protein is Large ribosomal subunit protein bL12 of Nautilia profundicola (strain ATCC BAA-1463 / DSM 18972 / AmH).